The chain runs to 244 residues: Cell division protein ZipA (244 aa).

Over 1-4 (MSDM) the chain is Periplasmic. The chain crosses the membrane as a helical span at residues 5-25 (AMIRIGILIAGLLLVAAIFLF). The Cytoplasmic portion of the chain corresponds to 26–244 (GRPKKSPQGR…APPLTKSPRW (219 aa)). Positions 30–91 (KSPQGRRVDK…GAGGNDVGKR (62 aa)) are disordered. The segment covering 35-50 (RRVDKDDTQPRERREP) has biased composition (basic and acidic residues).

It belongs to the ZipA family. In terms of assembly, interacts with FtsZ via their C-terminal domains.

Its subcellular location is the cell inner membrane. Essential cell division protein that stabilizes the FtsZ protofilaments by cross-linking them and that serves as a cytoplasmic membrane anchor for the Z ring. Also required for the recruitment to the septal ring of downstream cell division proteins. The sequence is that of Cell division protein ZipA from Xanthomonas campestris pv. campestris (strain ATCC 33913 / DSM 3586 / NCPPB 528 / LMG 568 / P 25).